The sequence spans 286 residues: ATP-binding protein ChvD (286 aa).

Positions Lys21 to Asn85 constitute an ABC transporter domain.

This sequence belongs to the ABC transporter superfamily.

Functionally, the induction of virG by growth under acidic conditions and by phosphate starvation, in the absence of plant inducers, is influenced by ChvD. The protein is ATP-binding protein ChvD (chvD) of Rhizobium radiobacter (Agrobacterium tumefaciens).